The chain runs to 181 residues: Small ribosomal subunit protein uS4 (181 aa).

An S4 RNA-binding domain is found at 108-177 (RRLQTMVYRQ…EGHPEIERIN (70 aa)). The disordered stretch occupies residues 161 to 181 (GTSPLTSEGHPEIERINKKRR). Residues 169–181 (GHPEIERINKKRR) show a composition bias toward basic and acidic residues.

It belongs to the universal ribosomal protein uS4 family. In terms of assembly, part of the 30S ribosomal subunit. Contacts protein S5. The interaction surface between S4 and S5 is involved in control of translational fidelity.

Its function is as follows. One of the primary rRNA binding proteins, it binds directly to 16S rRNA where it nucleates assembly of the body of the 30S subunit. With S5 and S12 plays an important role in translational accuracy. This Methanosphaerula palustris (strain ATCC BAA-1556 / DSM 19958 / E1-9c) protein is Small ribosomal subunit protein uS4.